The chain runs to 92 residues: Small ribosomal subunit protein uS19 (92 aa).

This sequence belongs to the universal ribosomal protein uS19 family.

Protein S19 forms a complex with S13 that binds strongly to the 16S ribosomal RNA. This chain is Small ribosomal subunit protein uS19, found in Geobacillus sp. (strain WCH70).